Consider the following 87-residue polypeptide: Small ribosomal subunit protein bS20 (87 aa).

A disordered region spans residues 1-25; the sequence is MANSAQARKRARQNISHRNRNMSLR. Over residues 7–20 the composition is skewed to basic residues; the sequence is ARKRARQNISHRNR.

Belongs to the bacterial ribosomal protein bS20 family.

In terms of biological role, binds directly to 16S ribosomal RNA. The chain is Small ribosomal subunit protein bS20 from Nitrosospira multiformis (strain ATCC 25196 / NCIMB 11849 / C 71).